The primary structure comprises 231 residues: UPF0758 protein RBAM_025090 (231 aa).

Residues 109–231 (VIRSPEDGAK…FVSLKEKGYL (123 aa)) enclose the MPN domain. Residues H180, H182, and D193 each coordinate Zn(2+). The JAMM motif motif lies at 180 to 193 (HNHPSGDPTPSRED).

This sequence belongs to the UPF0758 family.

The chain is UPF0758 protein RBAM_025090 from Bacillus velezensis (strain DSM 23117 / BGSC 10A6 / LMG 26770 / FZB42) (Bacillus amyloliquefaciens subsp. plantarum).